The chain runs to 695 residues: Elongation factor G 2 (695 aa).

Positions 5-280 (SLYRNIGIFA…AVVDYLPSPT (276 aa)) constitute a tr-type G domain. Residues 14–21 (AHVDAGKT), 78–82 (DTPGH), and 132–135 (NKLD) contribute to the GTP site.

It belongs to the TRAFAC class translation factor GTPase superfamily. Classic translation factor GTPase family. EF-G/EF-2 subfamily.

Its subcellular location is the cytoplasm. Functionally, catalyzes the GTP-dependent ribosomal translocation step during translation elongation. During this step, the ribosome changes from the pre-translocational (PRE) to the post-translocational (POST) state as the newly formed A-site-bound peptidyl-tRNA and P-site-bound deacylated tRNA move to the P and E sites, respectively. Catalyzes the coordinated movement of the two tRNA molecules, the mRNA and conformational changes in the ribosome. In Vibrio cholerae serotype O1 (strain ATCC 39315 / El Tor Inaba N16961), this protein is Elongation factor G 2.